The primary structure comprises 147 residues: Submaxillary gland androgen-regulated protein 3A (147 aa).

The first 22 residues, 1–22, serve as a signal peptide directing secretion; it reads MKPLNLVLGLCILVGCFLSCEC. The segment at 27–128 is disordered; the sequence is RRHDPRGPFP…ISITTPTARD (102 aa). Pro residues predominate over residues 33–105; sequence GPFPPPPPPH…PTPSIPPTGP (73 aa). A run of 3 repeats spans residues 43 to 54, 55 to 66, and 67 to 78. Positions 43 to 78 are 3 X 12 AA tandem repeats of G-P-G-I-G-R-P-[HP]-P-P-P-[PF]; sequence GPGIGRPHPPPFGPGIGRPPPPPFGPGIGRPPPPPP. Residues 108 to 127 are compositionally biased toward polar residues; that stretch reads TVQATTMPAASISITTPTAR.

The protein belongs to the PROL1/PROL3 family. Secreted into saliva by submaxillary gland.

Its subcellular location is the secreted. In terms of biological role, may play a role in protection or detoxification. The sequence is that of Submaxillary gland androgen-regulated protein 3A (Smr3a) from Mus musculus (Mouse).